Reading from the N-terminus, the 309-residue chain is Methionyl-tRNA formyltransferase (309 aa).

Residue 109–112 participates in (6S)-5,6,7,8-tetrahydrofolate binding; it reads SLLP.

It belongs to the Fmt family.

The enzyme catalyses L-methionyl-tRNA(fMet) + (6R)-10-formyltetrahydrofolate = N-formyl-L-methionyl-tRNA(fMet) + (6S)-5,6,7,8-tetrahydrofolate + H(+). In terms of biological role, attaches a formyl group to the free amino group of methionyl-tRNA(fMet). The formyl group appears to play a dual role in the initiator identity of N-formylmethionyl-tRNA by promoting its recognition by IF2 and preventing the misappropriation of this tRNA by the elongation apparatus. This chain is Methionyl-tRNA formyltransferase, found in Clostridium botulinum (strain Alaska E43 / Type E3).